Here is a 272-residue protein sequence, read N- to C-terminus: Acyl-[acyl-carrier-protein]--UDP-N-acetylglucosamine O-acyltransferase (272 aa).

It belongs to the transferase hexapeptide repeat family. LpxA subfamily. As to quaternary structure, homotrimer.

The protein resides in the cytoplasm. It carries out the reaction a (3R)-hydroxyacyl-[ACP] + UDP-N-acetyl-alpha-D-glucosamine = a UDP-3-O-[(3R)-3-hydroxyacyl]-N-acetyl-alpha-D-glucosamine + holo-[ACP]. It participates in glycolipid biosynthesis; lipid IV(A) biosynthesis; lipid IV(A) from (3R)-3-hydroxytetradecanoyl-[acyl-carrier-protein] and UDP-N-acetyl-alpha-D-glucosamine: step 1/6. In terms of biological role, involved in the biosynthesis of lipid A, a phosphorylated glycolipid that anchors the lipopolysaccharide to the outer membrane of the cell. The protein is Acyl-[acyl-carrier-protein]--UDP-N-acetylglucosamine O-acyltransferase of Rhizobium etli (strain ATCC 51251 / DSM 11541 / JCM 21823 / NBRC 15573 / CFN 42).